Reading from the N-terminus, the 306-residue chain is Acetaldehyde dehydrogenase (306 aa).

12-15 is an NAD(+) binding site; sequence SGNI. Catalysis depends on Cys127, which acts as the Acyl-thioester intermediate. NAD(+)-binding positions include 158 to 166 and Asn277; that span reads SAGPGTRAN.

This sequence belongs to the acetaldehyde dehydrogenase family.

The enzyme catalyses acetaldehyde + NAD(+) + CoA = acetyl-CoA + NADH + H(+). In Mycolicibacterium gilvum (strain PYR-GCK) (Mycobacterium gilvum (strain PYR-GCK)), this protein is Acetaldehyde dehydrogenase.